The chain runs to 1436 residues: tRNA (guanosine(18)-2'-O)-methyltransferase (1436 aa).

S-adenosyl-L-methionine is bound by residues 1365–1367, Gly1389, and 1409–1418; these read LEQ and IQQFGVIRSM.

Belongs to the class IV-like SAM-binding methyltransferase superfamily. RNA methyltransferase TrmH family.

It localises to the cytoplasm. It carries out the reaction guanosine(18) in tRNA + S-adenosyl-L-methionine = 2'-O-methylguanosine(18) in tRNA + S-adenosyl-L-homocysteine + H(+). In terms of biological role, S-adenosyl-L-methionine-dependent 2'-O-ribose methyltransferase that catalyzes the formation of 2'-O-methylguanosine at position 18 (Gm18) in various tRNAs. The chain is tRNA (guanosine(18)-2'-O)-methyltransferase from Saccharomyces cerevisiae (strain ATCC 204508 / S288c) (Baker's yeast).